The sequence spans 558 residues: Formate--tetrahydrofolate ligase (558 aa).

67 to 74 (TPAGEGKT) provides a ligand contact to ATP.

Belongs to the formate--tetrahydrofolate ligase family.

The catalysed reaction is (6S)-5,6,7,8-tetrahydrofolate + formate + ATP = (6R)-10-formyltetrahydrofolate + ADP + phosphate. It participates in one-carbon metabolism; tetrahydrofolate interconversion. This Sphingobium sp. (strain NBRC 103272 / SYK-6) protein is Formate--tetrahydrofolate ligase.